The sequence spans 96 residues: (4S)-4-hydroxy-5-phosphonooxypentane-2,3-dione isomerase (96 aa).

Residues 2–91 (HVTLVEINVH…MTGPRTKKVF (90 aa)) enclose the ABM domain.

Belongs to the LsrG family. Homodimer.

It localises to the cytoplasm. The catalysed reaction is (2S)-2-hydroxy-3,4-dioxopentyl phosphate = 3-hydroxy-2,4-dioxopentyl phosphate. Functionally, involved in the degradation of phospho-AI-2, thereby terminating induction of the lsr operon and closing the AI-2 signaling cycle. Catalyzes the conversion of (4S)-4-hydroxy-5-phosphonooxypentane-2,3-dione (P-DPD) to 3-hydroxy-5-phosphonooxypentane-2,4-dione (P-HPD). This is (4S)-4-hydroxy-5-phosphonooxypentane-2,3-dione isomerase from Salmonella choleraesuis (strain SC-B67).